The primary structure comprises 237 residues: Small ribosomal subunit protein uS3 (237 aa).

Residues 39-107 (VRQFLTKELK…PAQINISEVR (69 aa)) form the KH type-2 domain.

This sequence belongs to the universal ribosomal protein uS3 family. Part of the 30S ribosomal subunit. Forms a tight complex with proteins S10 and S14.

In terms of biological role, binds the lower part of the 30S subunit head. Binds mRNA in the 70S ribosome, positioning it for translation. This is Small ribosomal subunit protein uS3 from Aeromonas hydrophila subsp. hydrophila (strain ATCC 7966 / DSM 30187 / BCRC 13018 / CCUG 14551 / JCM 1027 / KCTC 2358 / NCIMB 9240 / NCTC 8049).